The following is a 168-amino-acid chain: Small ribosomal subunit protein uS5 (168 aa).

The region spanning L13–V76 is the S5 DRBM domain.

The protein belongs to the universal ribosomal protein uS5 family. As to quaternary structure, part of the 30S ribosomal subunit. Contacts proteins S4 and S8.

Its function is as follows. With S4 and S12 plays an important role in translational accuracy. Located at the back of the 30S subunit body where it stabilizes the conformation of the head with respect to the body. This chain is Small ribosomal subunit protein uS5, found in Alkaliphilus oremlandii (strain OhILAs) (Clostridium oremlandii (strain OhILAs)).